Here is a 431-residue protein sequence, read N- to C-terminus: Histidinol dehydrogenase (431 aa).

3 residues coordinate NAD(+): Tyr130, Gln192, and Asn215. Substrate is bound by residues Ser238, Gln260, and His263. Zn(2+) contacts are provided by Gln260 and His263. Active-site proton acceptor residues include Glu328 and His329. The substrate site is built by His329, Asp362, Glu416, and His421. Asp362 serves as a coordination point for Zn(2+). His421 is a binding site for Zn(2+).

It belongs to the histidinol dehydrogenase family. It depends on Zn(2+) as a cofactor.

It catalyses the reaction L-histidinol + 2 NAD(+) + H2O = L-histidine + 2 NADH + 3 H(+). It participates in amino-acid biosynthesis; L-histidine biosynthesis; L-histidine from 5-phospho-alpha-D-ribose 1-diphosphate: step 9/9. Catalyzes the sequential NAD-dependent oxidations of L-histidinol to L-histidinaldehyde and then to L-histidine. In Thermosynechococcus vestitus (strain NIES-2133 / IAM M-273 / BP-1), this protein is Histidinol dehydrogenase.